The following is a 207-amino-acid chain: Thiamine-phosphate synthase (207 aa).

4-amino-2-methyl-5-(diphosphooxymethyl)pyrimidine contacts are provided by residues 41–45 (QLRLK) and asparagine 73. Residues aspartate 74 and aspartate 93 each coordinate Mg(2+). Residue threonine 111 participates in 4-amino-2-methyl-5-(diphosphooxymethyl)pyrimidine binding. 138–140 (TKT) is a 2-[(2R,5Z)-2-carboxy-4-methylthiazol-5(2H)-ylidene]ethyl phosphate binding site. Lysine 141 is a binding site for 4-amino-2-methyl-5-(diphosphooxymethyl)pyrimidine. Position 168 (glycine 168) interacts with 2-[(2R,5Z)-2-carboxy-4-methylthiazol-5(2H)-ylidene]ethyl phosphate.

The protein belongs to the thiamine-phosphate synthase family. Mg(2+) is required as a cofactor.

It carries out the reaction 2-[(2R,5Z)-2-carboxy-4-methylthiazol-5(2H)-ylidene]ethyl phosphate + 4-amino-2-methyl-5-(diphosphooxymethyl)pyrimidine + 2 H(+) = thiamine phosphate + CO2 + diphosphate. It catalyses the reaction 2-(2-carboxy-4-methylthiazol-5-yl)ethyl phosphate + 4-amino-2-methyl-5-(diphosphooxymethyl)pyrimidine + 2 H(+) = thiamine phosphate + CO2 + diphosphate. The catalysed reaction is 4-methyl-5-(2-phosphooxyethyl)-thiazole + 4-amino-2-methyl-5-(diphosphooxymethyl)pyrimidine + H(+) = thiamine phosphate + diphosphate. Its pathway is cofactor biosynthesis; thiamine diphosphate biosynthesis; thiamine phosphate from 4-amino-2-methyl-5-diphosphomethylpyrimidine and 4-methyl-5-(2-phosphoethyl)-thiazole: step 1/1. Condenses 4-methyl-5-(beta-hydroxyethyl)thiazole monophosphate (THZ-P) and 2-methyl-4-amino-5-hydroxymethyl pyrimidine pyrophosphate (HMP-PP) to form thiamine monophosphate (TMP). In Pelagibacter ubique (strain HTCC1062), this protein is Thiamine-phosphate synthase.